Consider the following 61-residue polypeptide: Large ribosomal subunit protein uL30 (61 aa).

The protein belongs to the universal ribosomal protein uL30 family. As to quaternary structure, part of the 50S ribosomal subunit.

This chain is Large ribosomal subunit protein uL30, found in Corynebacterium efficiens (strain DSM 44549 / YS-314 / AJ 12310 / JCM 11189 / NBRC 100395).